The primary structure comprises 474 residues: tRNA-2-methylthio-N(6)-dimethylallyladenosine synthase (474 aa).

Residues 3 to 120 form the MTTase N-terminal domain; the sequence is KKLHIKTWGC…LPDMIDQVRR (118 aa). 6 residues coordinate [4Fe-4S] cluster: C12, C49, C83, C157, C161, and C164. The Radical SAM core domain occupies 143–375; it reads RAEGPTAFVS…QDRITQQAMR (233 aa). Residues 378 to 441 enclose the TRAM domain; it reads RHMMGTVQRI…TNSLRGKFIR (64 aa).

It belongs to the methylthiotransferase family. MiaB subfamily. Monomer. [4Fe-4S] cluster is required as a cofactor.

It is found in the cytoplasm. It carries out the reaction N(6)-dimethylallyladenosine(37) in tRNA + (sulfur carrier)-SH + AH2 + 2 S-adenosyl-L-methionine = 2-methylsulfanyl-N(6)-dimethylallyladenosine(37) in tRNA + (sulfur carrier)-H + 5'-deoxyadenosine + L-methionine + A + S-adenosyl-L-homocysteine + 2 H(+). Its function is as follows. Catalyzes the methylthiolation of N6-(dimethylallyl)adenosine (i(6)A), leading to the formation of 2-methylthio-N6-(dimethylallyl)adenosine (ms(2)i(6)A) at position 37 in tRNAs that read codons beginning with uridine. The polypeptide is tRNA-2-methylthio-N(6)-dimethylallyladenosine synthase (Shewanella sp. (strain ANA-3)).